Here is a 402-residue protein sequence, read N- to C-terminus: Ketol-acid reductoisomerase, mitochondrial (402 aa).

The N-terminal 26 residues, methionine 1–threonine 26, are a transit peptide targeting the mitochondrion. Residues lysine 63 to threonine 252 form the KARI N-terminal Rossmann domain. Residues glycine 90 to glycine 99, arginine 114 to serine 119, and serine 152 to glutamine 156 contribute to the NADP(+) site. The active site involves histidine 177. Residues threonine 253–asparagine 400 enclose the KARI C-terminal knotted domain. Residues aspartate 261, glutamate 265, glutamate 297, and glutamate 301 each contribute to the Mg(2+) site. Serine 323 serves as a coordination point for substrate.

The protein belongs to the ketol-acid reductoisomerase family. Mg(2+) serves as cofactor.

The protein localises to the mitochondrion. The catalysed reaction is (2R)-2,3-dihydroxy-3-methylbutanoate + NADP(+) = (2S)-2-acetolactate + NADPH + H(+). The enzyme catalyses (2R,3R)-2,3-dihydroxy-3-methylpentanoate + NADP(+) = (S)-2-ethyl-2-hydroxy-3-oxobutanoate + NADPH + H(+). The protein operates within amino-acid biosynthesis; L-isoleucine biosynthesis; L-isoleucine from 2-oxobutanoate: step 2/4. Its pathway is amino-acid biosynthesis; L-valine biosynthesis; L-valine from pyruvate: step 2/4. This is Ketol-acid reductoisomerase, mitochondrial (ilv-2) from Neurospora crassa (strain ATCC 24698 / 74-OR23-1A / CBS 708.71 / DSM 1257 / FGSC 987).